Here is a 378-residue protein sequence, read N- to C-terminus: Erythronate-4-phosphate dehydrogenase (378 aa).

Positions 45 and 66 each coordinate substrate. Residues aspartate 146 and threonine 175 each coordinate NAD(+). Arginine 208 is an active-site residue. Position 232 (aspartate 232) interacts with NAD(+). Glutamate 237 is a catalytic residue. Histidine 254 acts as the Proton donor in catalysis. Position 257 (glycine 257) interacts with NAD(+). Substrate is bound at residue tyrosine 258.

It belongs to the D-isomer specific 2-hydroxyacid dehydrogenase family. PdxB subfamily. As to quaternary structure, homodimer.

It localises to the cytoplasm. It carries out the reaction 4-phospho-D-erythronate + NAD(+) = (R)-3-hydroxy-2-oxo-4-phosphooxybutanoate + NADH + H(+). Its pathway is cofactor biosynthesis; pyridoxine 5'-phosphate biosynthesis; pyridoxine 5'-phosphate from D-erythrose 4-phosphate: step 2/5. Catalyzes the oxidation of erythronate-4-phosphate to 3-hydroxy-2-oxo-4-phosphonooxybutanoate. The protein is Erythronate-4-phosphate dehydrogenase of Cronobacter sakazakii (strain ATCC BAA-894) (Enterobacter sakazakii).